The chain runs to 421 residues: Gamma-glutamyl phosphate reductase (421 aa).

The protein belongs to the gamma-glutamyl phosphate reductase family.

The protein resides in the cytoplasm. The catalysed reaction is L-glutamate 5-semialdehyde + phosphate + NADP(+) = L-glutamyl 5-phosphate + NADPH + H(+). It functions in the pathway amino-acid biosynthesis; L-proline biosynthesis; L-glutamate 5-semialdehyde from L-glutamate: step 2/2. Catalyzes the NADPH-dependent reduction of L-glutamate 5-phosphate into L-glutamate 5-semialdehyde and phosphate. The product spontaneously undergoes cyclization to form 1-pyrroline-5-carboxylate. The polypeptide is Gamma-glutamyl phosphate reductase (Acinetobacter baumannii (strain AYE)).